A 395-amino-acid polypeptide reads, in one-letter code: Elongation factor Tu (395 aa).

The tr-type G domain maps to 10–204 (KPHVNIGTIG…IVDEYIPTPE (195 aa)). Positions 19-26 (GHVDHGKT) are G1. 19–26 (GHVDHGKT) serves as a coordination point for GTP. Thr-26 lines the Mg(2+) pocket. Residues 60-64 (GITIN) are G2. The segment at 81 to 84 (DAPG) is G3. GTP-binding positions include 81-85 (DAPGH) and 136-139 (NKAD). Positions 136–139 (NKAD) are G4. Positions 174–176 (SAL) are G5.

This sequence belongs to the TRAFAC class translation factor GTPase superfamily. Classic translation factor GTPase family. EF-Tu/EF-1A subfamily. As to quaternary structure, monomer.

Its subcellular location is the cytoplasm. It carries out the reaction GTP + H2O = GDP + phosphate + H(+). Functionally, GTP hydrolase that promotes the GTP-dependent binding of aminoacyl-tRNA to the A-site of ribosomes during protein biosynthesis. This is Elongation factor Tu from Lactococcus lactis subsp. lactis (strain IL1403) (Streptococcus lactis).